Consider the following 365-residue polypeptide: Peptide chain release factor 2 (365 aa).

The residue at position 252 (glutamine 252) is an N5-methylglutamine.

The protein belongs to the prokaryotic/mitochondrial release factor family. In terms of processing, methylated by PrmC. Methylation increases the termination efficiency of RF2.

Its subcellular location is the cytoplasm. In terms of biological role, peptide chain release factor 2 directs the termination of translation in response to the peptide chain termination codons UGA and UAA. The chain is Peptide chain release factor 2 (prfB) from Salmonella typhimurium (strain LT2 / SGSC1412 / ATCC 700720).